Here is an 86-residue protein sequence, read N- to C-terminus: Kappa-theraphotoxin-Cg1a 1 (86 aa).

The signal sequence occupies residues 1 to 21 (MKVSVLITLAVLGVMFVWASA). A propeptide spanning residues 22-50 (AELEERGSDQRDSPAWLKSMERIFQSGER) is cleaved from the precursor. 3 disulfide bridges follow: Cys52/Cys66, Cys59/Cys71, and Cys65/Cys78. The interval 55–56 (MF) is involved in active face. Phe84 is subject to Phenylalanine amide.

Belongs to the neurotoxin 10 (Hwtx-1) family. 28 (Jztx-11) subfamily. In terms of tissue distribution, expressed by the venom gland.

The protein resides in the secreted. Its function is as follows. This toxin acts as a voltage-dependent gating-modifier. It inhibits the sodium conductance (IC(50)=124 nM) and slows the fast inactivation (EC(50)=1180 nM) of Nav1.5/SCN5A. It significantly shifts the activation to more depolarized voltages and decreases the deactivation of Nav1.5 currents upon extreme depolarization, but only slightly affects voltage-dependence of steady-state inactivation. In addition, this toxin causes an approximately five-fold decrease in the rate of recovery from inactivation and an approximately 1.9-fold reduction in the closed-state inactivation rate. This toxin integrates the functions of site 3 toxins (alpha-scorpion toxins) with site 4 toxins (beta-scorpion and spider toxins) by targeting multiple sites on Nav1.5. Also shows inhibition of voltage-gated potassium channels (5 uM completely inhibits Kv2.1/KCNB1, whereas 5 uM moderately inhibits Kv4.2/KCND2 Kv4.1/KCND1 channels). This is Kappa-theraphotoxin-Cg1a 1 from Chilobrachys guangxiensis (Chinese earth tiger tarantula).